The sequence spans 91 residues: Small ribosomal subunit protein uS19 (91 aa).

Belongs to the universal ribosomal protein uS19 family.

Protein S19 forms a complex with S13 that binds strongly to the 16S ribosomal RNA. The chain is Small ribosomal subunit protein uS19 from Prochlorococcus marinus subsp. pastoris (strain CCMP1986 / NIES-2087 / MED4).